The sequence spans 94 residues: ESAT-6-like protein EsxN (94 aa).

This sequence belongs to the WXG100 family. ESAT-6 subfamily.

The protein resides in the secreted. The polypeptide is ESAT-6-like protein EsxN (Mycobacterium bovis (strain ATCC BAA-935 / AF2122/97)).